Consider the following 37-residue polypeptide: MKVSASVKKICRNCKIIRRKGVVRVICTDPRHKQRQG.

The protein belongs to the bacterial ribosomal protein bL36 family.

The polypeptide is Large ribosomal subunit protein bL36 (Leptothrix cholodnii (strain ATCC 51168 / LMG 8142 / SP-6) (Leptothrix discophora (strain SP-6))).